The primary structure comprises 220 residues: Early protein OPG038 (220 aa).

A signal peptide spans 1–17 (MVYKLVLLFCIASLGYS).

Belongs to the orthopoxvirus OPG038 family. Homooligomer. Interacts with host CD80 and CD86 when secreted. Glycosylated by host.

Its subcellular location is the host endoplasmic reticulum. It is found in the secreted. In terms of biological role, plays a role in immune evasion. When secreted, inhibits T-cell activation by preventing the binding of host CD80 and CD86 to soluble CTLA4 and CD28. In the infected cell, may inhibits host NF kappa B activation. This is Early protein OPG038 (OPG038) from Homo sapiens (Human).